Here is a 736-residue protein sequence, read N- to C-terminus: Peroxisomal multifunctional enzyme type 2 (736 aa).

The interval Met1 to Glu305 is (3R)-hydroxyacyl-CoA dehydrogenase. NAD(+)-binding positions include Leu13–Val37, Leu21, and Asp40. An N6-acetyllysine; alternate modification is found at Lys46. Position 46 is an N6-succinyllysine; alternate (Lys46). Phosphoserine is present on Ser52. Lys57 and Lys68 each carry N6-succinyllysine. Ser75–Val76 contributes to the NAD(+) binding site. Lys84 bears the N6-succinyllysine mark. Residue Asn99 coordinates NAD(+). Residue Ser151 coordinates substrate. The Proton acceptor role is filled by Tyr164. NAD(+)-binding positions include Tyr164 to Lys168 and Ala196 to Arg199. Position 265 is a phosphothreonine (Thr265). Lys275 carries the N6-succinyllysine modification. Phosphoserine occurs at positions 304 and 309. The enoyl-CoA hydratase 2 stretch occupies residues Ser322–Leu622. Residue Lys356 is modified to N6-succinyllysine. His406–Gly407 provides a ligand contact to (3R)-3-hydroxydecanoyl-CoA. Residue Lys424 is modified to N6-succinyllysine. (3R)-3-hydroxydecanoyl-CoA is bound by residues Lys435, Asp510–His515, Gly533, and Phe563. Residues Ile484 to Asn600 enclose the MaoC-like domain. Position 565 is an N6-acetyllysine (Lys565). Lys579 and Lys663 each carry N6-succinyllysine. Positions Ser624–Leu736 constitute an SCP2 domain. N6-acetyllysine is present on Lys669. Gln706 is a binding site for substrate. Lys707 carries the post-translational modification N6-acetyllysine. Gln724 contacts substrate. N6-succinyllysine is present on Lys725. The Microbody targeting signal motif lies at Ala734–Leu736.

The protein belongs to the short-chain dehydrogenases/reductases (SDR) family. Homodimer. Present in many tissues with highest concentrations in liver, heart, prostate and testis.

The protein localises to the peroxisome. It catalyses the reaction a (3R)-3-hydroxyacyl-CoA + NAD(+) = a 3-oxoacyl-CoA + NADH + H(+). The catalysed reaction is a (3R)-3-hydroxyacyl-CoA = a (2E)-enoyl-CoA + H2O. It carries out the reaction (24R,25R)-3alpha,7alpha,12alpha,24-tetrahydroxy-5beta-cholestan-26-oyl-CoA = (24E)-3alpha,7alpha,12alpha-trihydroxy-5beta-cholest-24-en-26-oyl-CoA + H2O. The enzyme catalyses (2E)-octenoyl-CoA + H2O = (3R)-hydroxyoctanoyl-CoA. It catalyses the reaction (3R)-hydroxyoctanoyl-CoA + NAD(+) = 3-oxooctanoyl-CoA + NADH + H(+). The catalysed reaction is (3R)-hydroxyhexadecanoyl-CoA + NAD(+) = 3-oxohexadecanoyl-CoA + NADH + H(+). It carries out the reaction (2E)-hexadecenedioyl-CoA + H2O = (3R)-hydroxyhexadecanedioyl-CoA. The enzyme catalyses (3R)-hydroxyhexadecanedioyl-CoA + NAD(+) = 3-oxohexadecanedioyl-CoA + NADH + H(+). It catalyses the reaction (3R)-hydroxyhexadecanoyl-CoA = (2E)-hexadecenoyl-CoA + H2O. The catalysed reaction is (3R)-3-hydroxydecanoyl-CoA = (2E)-decenoyl-CoA + H2O. It carries out the reaction (3R)-3-hydroxydecanoyl-CoA + NAD(+) = 3-oxodecanoyl-CoA + NADH + H(+). The enzyme catalyses (24R,25R)-3alpha,7alpha,12alpha,24-tetrahydroxy-5beta-cholestan-26-oyl-CoA + NAD(+) = 3alpha,7alpha,12alpha-trihydroxy-24-oxo-5beta-cholestan-26-oyl-CoA + NADH + H(+). It participates in lipid metabolism; fatty acid beta-oxidation. Bifunctional enzyme acting on the peroxisomal fatty acid beta-oxidation pathway. Catalyzes two of the four reactions in fatty acid degradation: hydration of 2-enoyl-CoA (trans-2-enoyl-CoA) to produce (3R)-3-hydroxyacyl-CoA, and dehydrogenation of (3R)-3-hydroxyacyl-CoA to produce 3-ketoacyl-CoA (3-oxoacyl-CoA), which is further metabolized by SCPx. Can use straight-chain and branched-chain fatty acids, as well as bile acid intermediates as substrates. The polypeptide is Peroxisomal multifunctional enzyme type 2 (Homo sapiens (Human)).